The sequence spans 110 residues: UPF0060 membrane protein Veis_0342 (110 aa).

Helical transmembrane passes span 8–28 (VLFTITAVVEIVGCYLPWLVI), 33–53 (PLWLLLPAALSLALFAWLLTL), 63–83 (AAYGGIYIAVALAWLHWVDGV), and 90–110 (VAGATVAMVGMLIIMLQPASA).

This sequence belongs to the UPF0060 family.

Its subcellular location is the cell inner membrane. This Verminephrobacter eiseniae (strain EF01-2) protein is UPF0060 membrane protein Veis_0342.